We begin with the raw amino-acid sequence, 485 residues long: GlcNAc-binding protein A (485 aa).

The signal sequence occupies residues 1 to 23 (MKKQPKMTAIALILSGISGLAYG). Positions 24 to 201 (HGYVSAVENG…SFYNVIDVKF (178 aa)) constitute a Chitin-binding type-4 domain. In terms of domain architecture, Chitin-binding type-3 spans 437 to 478 (AGTKVLASDGAIYQCKPWPYSGYCQQWTSNATQYQPGTGSHW).

The protein belongs to the GbpA family.

Its subcellular location is the secreted. Its function is as follows. Probably interacts with GlcNAc residues. May promote attachment to both epithelial cell surfaces and chitin. In Vibrio cholerae serotype O1 (strain M66-2), this protein is GlcNAc-binding protein A.